A 155-amino-acid polypeptide reads, in one-letter code: Small ribosomal subunit protein uS7 (155 aa).

Belongs to the universal ribosomal protein uS7 family. Part of the 30S ribosomal subunit. Contacts proteins S9 and S11.

In terms of biological role, one of the primary rRNA binding proteins, it binds directly to 16S rRNA where it nucleates assembly of the head domain of the 30S subunit. Is located at the subunit interface close to the decoding center, probably blocks exit of the E-site tRNA. This chain is Small ribosomal subunit protein uS7, found in Xylella fastidiosa (strain 9a5c).